A 418-amino-acid chain; its full sequence is tRNA-2-methylthio-N(6)-dimethylallyladenosine synthase (418 aa).

An MTTase N-terminal domain is found at 2–118; it reads PGYYLWTIGC…WREIPEGFIL (117 aa). [4Fe-4S] cluster-binding residues include cysteine 11, cysteine 47, cysteine 81, cysteine 134, cysteine 138, and cysteine 141. The Radical SAM core domain occupies 120–351; the sequence is LRPPVSANVT…EDLQKETVGK (232 aa). Residues 346 to 414 enclose the TRAM domain; it reads KETVGKANAA…PWSLQAKLVN (69 aa).

Belongs to the methylthiotransferase family. MiaB subfamily. As to quaternary structure, monomer. The cofactor is [4Fe-4S] cluster.

The protein localises to the cytoplasm. It catalyses the reaction N(6)-dimethylallyladenosine(37) in tRNA + (sulfur carrier)-SH + AH2 + 2 S-adenosyl-L-methionine = 2-methylsulfanyl-N(6)-dimethylallyladenosine(37) in tRNA + (sulfur carrier)-H + 5'-deoxyadenosine + L-methionine + A + S-adenosyl-L-homocysteine + 2 H(+). Its function is as follows. Catalyzes the methylthiolation of N6-(dimethylallyl)adenosine (i(6)A), leading to the formation of 2-methylthio-N6-(dimethylallyl)adenosine (ms(2)i(6)A) at position 37 in tRNAs that read codons beginning with uridine. This is tRNA-2-methylthio-N(6)-dimethylallyladenosine synthase from Dehalococcoides mccartyi (strain CBDB1).